Reading from the N-terminus, the 957-residue chain is Glycine dehydrogenase (decarboxylating) (957 aa).

K708 is subject to N6-(pyridoxal phosphate)lysine.

This sequence belongs to the GcvP family. The glycine cleavage system is composed of four proteins: P, T, L and H. Requires pyridoxal 5'-phosphate as cofactor.

It catalyses the reaction N(6)-[(R)-lipoyl]-L-lysyl-[glycine-cleavage complex H protein] + glycine + H(+) = N(6)-[(R)-S(8)-aminomethyldihydrolipoyl]-L-lysyl-[glycine-cleavage complex H protein] + CO2. Functionally, the glycine cleavage system catalyzes the degradation of glycine. The P protein binds the alpha-amino group of glycine through its pyridoxal phosphate cofactor; CO(2) is released and the remaining methylamine moiety is then transferred to the lipoamide cofactor of the H protein. This is Glycine dehydrogenase (decarboxylating) from Klebsiella pneumoniae subsp. pneumoniae (strain ATCC 700721 / MGH 78578).